We begin with the raw amino-acid sequence, 306 residues long: Ribonuclease Z (306 aa).

The Zn(2+) site is built by histidine 63, histidine 65, aspartate 67, histidine 68, histidine 141, aspartate 211, and histidine 269. The active-site Proton acceptor is aspartate 67.

This sequence belongs to the RNase Z family. In terms of assembly, homodimer. Requires Zn(2+) as cofactor.

It carries out the reaction Endonucleolytic cleavage of RNA, removing extra 3' nucleotides from tRNA precursor, generating 3' termini of tRNAs. A 3'-hydroxy group is left at the tRNA terminus and a 5'-phosphoryl group is left at the trailer molecule.. In terms of biological role, zinc phosphodiesterase, which displays some tRNA 3'-processing endonuclease activity. Probably involved in tRNA maturation, by removing a 3'-trailer from precursor tRNA. In Staphylococcus haemolyticus (strain JCSC1435), this protein is Ribonuclease Z.